A 444-amino-acid polypeptide reads, in one-letter code: ATP-dependent RNA helicase sub2 (444 aa).

The short motif at 59 to 87 is the Q motif element; sequence TGFREFLLKPELLRAISWCGFEHPSEVQQ. One can recognise a Helicase ATP-binding domain in the interval 90–265; sequence IPQAILGTDV…KKFMQNPLEI (176 aa). 103–110 lines the ATP pocket; it reads AKSGLGKT. Positions 212 to 215 match the DECD box motif; the sequence is DECD. One can recognise a Helicase C-terminal domain in the interval 277–438; it reads GLQQYYIKLE…EYPEGGVDSA (162 aa).

The protein belongs to the DEAD box helicase family. DECD subfamily.

It is found in the nucleus. The catalysed reaction is ATP + H2O = ADP + phosphate + H(+). In terms of biological role, ATP-binding RNA helicase involved in transcription elongation and required for the export of mRNA out of the nucleus. SUB2 also plays a role in pre-mRNA splicing and spliceosome assembly. May be involved in rDNA and telomeric silencing, and maintenance of genome integrity. This is ATP-dependent RNA helicase sub2 (sub2) from Sclerotinia sclerotiorum (strain ATCC 18683 / 1980 / Ss-1) (White mold).